Consider the following 121-residue polypeptide: NADH-quinone oxidoreductase subunit A (121 aa).

3 helical membrane-spanning segments follow: residues 8 to 28 (YLPI…TIIG), 65 to 85 (LVAI…PWAI), and 93 to 113 (QGMI…FYII).

Belongs to the complex I subunit 3 family. NDH-1 is composed of 14 different subunits. Subunits NuoA, H, J, K, L, M, N constitute the membrane sector of the complex.

It localises to the cell inner membrane. The enzyme catalyses a quinone + NADH + 5 H(+)(in) = a quinol + NAD(+) + 4 H(+)(out). Functionally, NDH-1 shuttles electrons from NADH, via FMN and iron-sulfur (Fe-S) centers, to quinones in the respiratory chain. The immediate electron acceptor for the enzyme in this species is believed to be a menaquinone. Couples the redox reaction to proton translocation (for every two electrons transferred, four hydrogen ions are translocated across the cytoplasmic membrane), and thus conserves the redox energy in a proton gradient. The protein is NADH-quinone oxidoreductase subunit A of Flavobacterium psychrophilum (strain ATCC 49511 / DSM 21280 / CIP 103535 / JIP02/86).